A 245-amino-acid polypeptide reads, in one-letter code: Adapter protein MecA (245 aa).

The protein belongs to the MecA family. Homodimer.

Functionally, enables the recognition and targeting of unfolded and aggregated proteins to the ClpC protease or to other proteins involved in proteolysis. The chain is Adapter protein MecA from Streptococcus pneumoniae serotype 4 (strain ATCC BAA-334 / TIGR4).